The sequence spans 618 residues: Cytosolic Fe-S cluster assembly factor NAR1 (618 aa).

Residues Cys20, Cys61, Cys64, Cys67, Cys212, Cys267, Cys471, and Cys475 each contribute to the [4Fe-4S] cluster site. 2 disordered regions span residues 495–516 and 530–560; these read TSSIDGSAPTAQTSQHKPTPQE and SADSDSHPPSSPSTSLGDEMEIDRPLEPESR.

The protein belongs to the NARF family.

Functionally, component of the cytosolic Fe/S protein assembly machinery. Required for maturation of extramitochondrial Fe/S proteins. May play a role in the transfer of pre-assembled Fe/S clusters to target apoproteins. The chain is Cytosolic Fe-S cluster assembly factor NAR1 (NAR1) from Coccidioides immitis (strain RS) (Valley fever fungus).